A 468-amino-acid polypeptide reads, in one-letter code: MHYLDNLLLNTDSYKASHWLQYPPGTDASFFYVESRGGVYDQTAFFGLQSILKEAINRPVTHADIDDAKALLAAHGEPFNEAGWRDIVDRLGGQLPIRIRAVPEGCVVPTHNVLMTIESTDAKAFWVPSYLETLLLRVWYPVTVATVSWQVKQIVRDFLQRTSDDPEGQLPFKLHDFGARGVSSLGSAALGGAAHLVNFLGTDTLSALLLARAHYHTPVAGYSIPAAEHSTITSWGREREVDAYRNMLTQFARPGAIVAVVSDSYDIYRAIREHWGTTLREEIIASGATVVIRPDSGDPVDVVEQCLLLLDEAFGHQVNGKGYKVLNHVRVIQGDGINPQSLRAILERITAAGYAADNVAFGMGGALLQKVDRDTQKFALKCSAVRVDGAWIDVYKDPITDQGKQSKRGRLTLLRDRATGQYRSALLDEVATHAGDSDDALVTVWENGQMLREWTLEQVRAHADAARL.

Arg-180 serves as a coordination point for diphosphate. Beta-nicotinamide D-ribonucleotide is bound at residue Asp-203. Diphosphate is bound by residues His-229 and Arg-293. A Phosphohistidine; by autocatalysis modification is found at His-229. The beta-nicotinamide D-ribonucleotide site is built by Asp-335 and Arg-373.

The protein belongs to the NAPRTase family. Homodimer. The dimeric structure consists of two protomers arranged head to tail, with domain A on one protomer interacting with domain B on the other protomer. In terms of processing, phosphorylation at His-229 plays a crucial role in enhancing the substrate affinity and is important for maintaining enzymatic activity.

It carries out the reaction beta-nicotinamide D-ribonucleotide + diphosphate = 5-phospho-alpha-D-ribose 1-diphosphate + nicotinamide + H(+). It functions in the pathway cofactor biosynthesis; NAD(+) biosynthesis; nicotinamide D-ribonucleotide from 5-phospho-alpha-D-ribose 1-diphosphate and nicotinamide: step 1/1. Its activity is regulated as follows. ATP-dependent autophosphorylation plays a vital role in nicotinamide binding and enzyme activation. Activity is inhibited by FK866. Catalyzes the condensation of nicotinamide with 5-phosphoribosyl-1-pyrophosphate to yield nicotinamide mononucleotide, an intermediate in the biosynthesis of NAD. Plays an important role in the biosynthesis of NAD via the nicotinamide (NAM) salvage pathway. Is also capable of hydrolyzing ATP and shows ATP-dependent autophosphorylation activity. The polypeptide is Nicotinamide phosphoribosyltransferase (Xanthomonas campestris pv. campestris (strain 8004)).